A 451-amino-acid polypeptide reads, in one-letter code: Probable carboxypeptidase PMAA_093910 (451 aa).

Positions Met1–Ala19 are cleaved as a signal peptide. The N-linked (GlcNAc...) asparagine glycan is linked to Asn149. Asp171 lines the Zn(2+) pocket. Residue Glu203 is the Proton acceptor of the active site. Glu204 serves as a coordination point for Zn(2+). N-linked (GlcNAc...) asparagine glycosylation is present at Asn354.

This sequence belongs to the peptidase M20A family. Requires Zn(2+) as cofactor.

Its subcellular location is the secreted. In Talaromyces marneffei (strain ATCC 18224 / CBS 334.59 / QM 7333) (Penicillium marneffei), this protein is Probable carboxypeptidase PMAA_093910.